The primary structure comprises 176 residues: Large ribosomal subunit protein bL17 (176 aa).

Residues 124–176 (AAPKAARQDRSKRVKGSRKTEASAAKAAPAAQAAPELPAESDAPAAEAAPTEE) are disordered. Over residues 145–176 (ASAAKAAPAAQAAPELPAESDAPAAEAAPTEE) the composition is skewed to low complexity.

It belongs to the bacterial ribosomal protein bL17 family. In terms of assembly, part of the 50S ribosomal subunit. Contacts protein L32.

The protein is Large ribosomal subunit protein bL17 of Chlorobium phaeovibrioides (strain DSM 265 / 1930) (Prosthecochloris vibrioformis (strain DSM 265)).